The sequence spans 594 residues: UvrABC system protein C (594 aa).

In terms of domain architecture, GIY-YIG spans Asp14–Ile91. The region spanning Lys196–Ile231 is the UVR domain.

The protein belongs to the UvrC family. As to quaternary structure, interacts with UvrB in an incision complex.

The protein localises to the cytoplasm. Its function is as follows. The UvrABC repair system catalyzes the recognition and processing of DNA lesions. UvrC both incises the 5' and 3' sides of the lesion. The N-terminal half is responsible for the 3' incision and the C-terminal half is responsible for the 5' incision. This is UvrABC system protein C from Bacillus cereus (strain B4264).